A 130-amino-acid polypeptide reads, in one-letter code: Small ribosomal subunit protein uS9 (130 aa).

The segment at 107-130 (DSREVERKKVGLRKARRRPQFSKR) is disordered. Over residues 116-130 (VGLRKARRRPQFSKR) the composition is skewed to basic residues.

It belongs to the universal ribosomal protein uS9 family.

The chain is Small ribosomal subunit protein uS9 from Marinomonas sp. (strain MWYL1).